The sequence spans 64 residues: Ribosome biogenesis protein Nop10 (64 aa).

It belongs to the NOP10 family.

Its function is as follows. Involved in ribosome biogenesis; more specifically in 18S rRNA pseudouridylation and in cleavage of pre-rRNA. The sequence is that of Ribosome biogenesis protein Nop10 from Ignicoccus hospitalis (strain KIN4/I / DSM 18386 / JCM 14125).